The primary structure comprises 502 residues: SCRSYRISPGYSVTRTFSSCSAVAPKTGSRCCISAAPYRGVSCYRGLTGFGSRSVSALGSCGPRIAVSGFRAGSCGRSFGYRSGGVGGLSPSCITTVSVNESLLTPLNLEIDPNAQCVKHQEKEQIKNLNSRFAAFIDKVRFLEQQNKLLETKWQFYQNQRCCESNLEPLFNGYIETLRREAEHVEADSGRLASELDHVQEVLEGYKKKYEEEVALRATAENEFVVLKKDVDCAYLRKSDLEANVEALVEESNFLKRLYDEEIQILNAHISDTSVIVKMDNSRDLNMDCVVAEIKAQYDDIASRSRAEAESWYRSKCEEMKATVIRHGETLRRTKEEINELNRVIQRLTAEIENAKCQRTKLEAAVAEAEQQGEAALNDARSKLAGLEEALQKAKQDMACLLKEYQEVMNSKLGLDIEIATYRRLLEGEEQRLCEGVGSVNVCVSSRGGVACGGLTYSSTAGRQIASGPVATGGSITVLAPDSCQPRASSFSCGSSRSVRFA.

Position 1 is a blocked amino end (Ser) (Ser1). Positions 1 to 122 (SCRSYRISPG…PNAQCVKHQE (122 aa)) are head. An IF rod domain is found at 122-433 (EKEQIKNLNS…RLLEGEEQRL (312 aa)). The interval 123–157 (KEQIKNLNSRFAAFIDKVRFLEQQNKLLETKWQFY) is coil 1A. The segment at 158-167 (QNQRCCESNL) is linker 1. The coil 1B stretch occupies residues 168–268 (EPLFNGYIET…YDEEIQILNA (101 aa)). Residue Lys228 forms a Glycyl lysine isopeptide (Lys-Gly) (interchain with G-Cter in SUMO1) linkage. Residues 269–285 (HISDTSVIVKMDNSRDL) are linker 12. The tract at residues 286–429 (NMDCVVAEIK…ATYRRLLEGE (144 aa)) is coil 2. Positions 430–502 (EQRLCEGVGS…CGSSRSVRFA (73 aa)) are tail.

This sequence belongs to the intermediate filament family. In terms of tissue distribution, hard keratin wool.

Wool microfibrillar keratin. The chain is Keratin, type II microfibrillar, component 5 from Ovis aries (Sheep).